Here is an 814-residue protein sequence, read N- to C-terminus: Protein fam-161 (814 aa).

The span at 71 to 87 shows a compositional bias: polar residues; the sequence is ITQHRSSYKVTKSSSCH. 4 disordered regions span residues 71–130, 150–255, 569–610, and 714–814; these read ITQH…SWSQ, RHQV…ATSA, SRSK…THAT, and MKSA…SSEA. Over residues 99–111 the composition is skewed to basic and acidic residues; the sequence is MPRHLDLKPRSSE. Positions 174–193 are enriched in low complexity; the sequence is STAPSQVSVTSSVQSVAALS. Composition is skewed to polar residues over residues 194 to 207 and 216 to 235; these read GQNP…TPSH and RTHQ…TLQN. Positions 236 to 249 are enriched in basic residues; sequence PRHRTSSASRHHST. 2 stretches are compositionally biased toward polar residues: residues 570 to 583 and 594 to 610; these read RSKS…NCQE and ENLP…THAT. Residues 606 to 689 adopt a coiled-coil conformation; it reads STHATQLREE…LAEMKQRVLN (84 aa). The span at 714-727 shows a compositional bias: basic and acidic residues; it reads MKSAKGRGIERVQS. The span at 728–745 shows a compositional bias: polar residues; the sequence is QEKQQSIGRRSSEVSGSG. The span at 751–765 shows a compositional bias: basic and acidic residues; sequence KGYEESFESEDKSEK. 2 stretches are compositionally biased toward low complexity: residues 766–779 and 795–814; these read SGSS…SGSE and SKST…SSEA.

The protein belongs to the FAM161 family. In terms of tissue distribution, expressed in amphid and phasmid ciliated neurons.

It localises to the cell projection. The protein localises to the cilium. Its subcellular location is the cytoplasm. The protein resides in the cytoskeleton. It is found in the cilium axoneme. This chain is Protein fam-161, found in Caenorhabditis elegans.